Reading from the N-terminus, the 454-residue chain is Histidine--tRNA ligase (454 aa).

Belongs to the class-II aminoacyl-tRNA synthetase family. As to quaternary structure, homodimer.

It is found in the cytoplasm. The catalysed reaction is tRNA(His) + L-histidine + ATP = L-histidyl-tRNA(His) + AMP + diphosphate + H(+). This chain is Histidine--tRNA ligase, found in Porphyromonas gingivalis (strain ATCC BAA-308 / W83).